A 217-amino-acid polypeptide reads, in one-letter code: Ras-related protein RABA2d (217 aa).

GTP is bound at residue 19 to 26 (GDSGVGKT). Positions 41-49 (SKSTIGVEF) match the Effector region motif. Residues 67 to 71 (DTAGQ), 125 to 128 (NKAD), and 155 to 156 (SA) contribute to the GTP site. The segment at 196-217 (GQGTTINVEDTSGAGKRGCCST) is disordered. Residues C214 and C215 are each lipidated (S-geranylgeranyl cysteine).

Belongs to the small GTPase superfamily. Rab family. In terms of tissue distribution, expressed in root tips.

The protein resides in the endosome membrane. The protein localises to the golgi apparatus. It localises to the trans-Golgi network membrane. In terms of biological role, intracellular vesicle trafficking and protein transport. The sequence is that of Ras-related protein RABA2d (RABA2D) from Arabidopsis thaliana (Mouse-ear cress).